Consider the following 107-residue polypeptide: MINGDIILFALMVVTGVNLARYLTALRSLIYIMREAHPLLYQQVDGNGFFTTHGNVTKQVRLYHYLKSKEYHHHHDEVFTGKCDRVRELFVLSVSLTGVTLLAAFLL.

Transmembrane regions (helical) follow at residues 6 to 26 and 86 to 106; these read IILF…LTAL and VREL…AAFL.

The protein belongs to the universal stress protein B family.

The protein resides in the cell inner membrane. This Vibrio vulnificus (strain CMCP6) protein is Universal stress protein B homolog.